Here is a 462-residue protein sequence, read N- to C-terminus: Siroheme synthase (462 aa).

The precorrin-2 dehydrogenase /sirohydrochlorin ferrochelatase stretch occupies residues 1–201 (MQFLPLFHKL…GKPEEGERLL (201 aa)). NAD(+) contacts are provided by residues 22-23 (EV) and 43-44 (PE). Serine 126 carries the phosphoserine modification. Residues 214-462 (GEVYLVGAGP…AWFEGAQGSL (249 aa)) form a uroporphyrinogen-III C-methyltransferase region. Proline 223 serves as a coordination point for S-adenosyl-L-methionine. Aspartate 246 (proton acceptor) is an active-site residue. The Proton donor role is filled by lysine 268. S-adenosyl-L-methionine is bound by residues 299–301 (GGD), isoleucine 304, 329–330 (TA), methionine 381, and glycine 410.

The protein in the N-terminal section; belongs to the precorrin-2 dehydrogenase / sirohydrochlorin ferrochelatase family. This sequence in the C-terminal section; belongs to the precorrin methyltransferase family.

It carries out the reaction uroporphyrinogen III + 2 S-adenosyl-L-methionine = precorrin-2 + 2 S-adenosyl-L-homocysteine + H(+). The catalysed reaction is precorrin-2 + NAD(+) = sirohydrochlorin + NADH + 2 H(+). It catalyses the reaction siroheme + 2 H(+) = sirohydrochlorin + Fe(2+). Its pathway is cofactor biosynthesis; adenosylcobalamin biosynthesis; precorrin-2 from uroporphyrinogen III: step 1/1. It functions in the pathway cofactor biosynthesis; adenosylcobalamin biosynthesis; sirohydrochlorin from precorrin-2: step 1/1. The protein operates within porphyrin-containing compound metabolism; siroheme biosynthesis; precorrin-2 from uroporphyrinogen III: step 1/1. It participates in porphyrin-containing compound metabolism; siroheme biosynthesis; siroheme from sirohydrochlorin: step 1/1. Its pathway is porphyrin-containing compound metabolism; siroheme biosynthesis; sirohydrochlorin from precorrin-2: step 1/1. In terms of biological role, multifunctional enzyme that catalyzes the SAM-dependent methylations of uroporphyrinogen III at position C-2 and C-7 to form precorrin-2 via precorrin-1. Then it catalyzes the NAD-dependent ring dehydrogenation of precorrin-2 to yield sirohydrochlorin. Finally, it catalyzes the ferrochelation of sirohydrochlorin to yield siroheme. The protein is Siroheme synthase of Ectopseudomonas mendocina (strain ymp) (Pseudomonas mendocina).